The primary structure comprises 622 residues: Glutamyl-tRNA(Gln) amidotransferase subunit E (622 aa).

It belongs to the GatB/GatE family. GatE subfamily. Heterodimer of GatD and GatE.

It catalyses the reaction L-glutamyl-tRNA(Gln) + L-glutamine + ATP + H2O = L-glutaminyl-tRNA(Gln) + L-glutamate + ADP + phosphate + H(+). Allows the formation of correctly charged Gln-tRNA(Gln) through the transamidation of misacylated Glu-tRNA(Gln) in organisms which lack glutaminyl-tRNA synthetase. The reaction takes place in the presence of glutamine and ATP through an activated gamma-phospho-Glu-tRNA(Gln). The GatDE system is specific for glutamate and does not act on aspartate. The polypeptide is Glutamyl-tRNA(Gln) amidotransferase subunit E (Halobacterium salinarum (strain ATCC 29341 / DSM 671 / R1)).